Here is a 141-residue protein sequence, read N- to C-terminus: Large ribosomal subunit protein bL17 (141 aa).

The protein belongs to the bacterial ribosomal protein bL17 family. Part of the 50S ribosomal subunit. Contacts protein L32.

In Chlamydia trachomatis serovar D (strain ATCC VR-885 / DSM 19411 / UW-3/Cx), this protein is Large ribosomal subunit protein bL17.